The following is a 392-amino-acid chain: Cyclic di-GMP phosphodiesterase RocR (392 aa).

The region spanning 5–126 is the Response regulatory domain; sequence NVLVLEDEPF…RITALLTRYN (122 aa). Asp56 carries the post-translational modification 4-aspartylphosphate. Residues 140–392 form the EAL domain; sequence ELPSVADVVR…QHFLDYCSGS (253 aa). Mg(2+) is bound by residues Glu175, Asn233, Glu265, and Asp295. Glu352 serves as the catalytic Proton acceptor.

In terms of assembly, homotetramer. Exhibits a highly unusual tetrameric structure arranged around a single dyad, with the four subunits adopting two distinctly different conformations, with only two active sites accessible for substrate binding. Interacts with RocS1. Mg(2+) serves as cofactor.

It catalyses the reaction 3',3'-c-di-GMP + H2O = 5'-phosphoguanylyl(3'-&gt;5')guanosine + H(+). With respect to regulation, phosphorylation of Asp-56 probably induces local conformational changes in the response regulatory domain. These structural changes are transmitted to the adjacent EAL domain, then the signal is further transmitted down to the active site. The phosphodiesterase activity is inhibited by Ca(2+) and Zn(2+). Phosphodiesterase activity is inhibited by a benzoisothiazolinone derivative that specifically inhibited RocR, but not some other phosphodiesterases. Its function is as follows. Phosphodiesterase (PDE) that catalyzes the hydrolysis of cyclic diguanylate (c-di-GMP) to 5'-pGpG. Cannot use cyclic AMP or cyclic GMP. Part of the RocSAR two-component regulatory signaling system (also known as the SadARS system), which regulates biofilm maturation, type III secretion and expression of the cup fimbrial-gene cluster. Negatively regulates the expression of cup genes by antagonizing the activity of RocA1. This chain is Cyclic di-GMP phosphodiesterase RocR, found in Pseudomonas aeruginosa (strain ATCC 15692 / DSM 22644 / CIP 104116 / JCM 14847 / LMG 12228 / 1C / PRS 101 / PAO1).